A 1068-amino-acid chain; its full sequence is Probable ATPase FE772_23070 (1068 aa).

ATP is bound at residue 217–224 (GGGGAGKT).

Involved in defense against bacteriophages. When this probable 4 gene operon (bGSDM-FE772_23060-FE772_23065-FE772_23070) is inserted into E.coli it provides nearly 100-fold protection against phages T5 and T6 and about 8-fold against phage T4. The operon without bGSDM no longer protects against phage. Probably a nucleotide hydrolase, possibly of ATP. This Lysobacter enzymogenes protein is Probable ATPase FE772_23070.